The primary structure comprises 1307 residues: Histone-lysine N-methyltransferase SETDB1 (1307 aa).

Residues 30–65 (VEELGISMEELRQYIDEELEKMDCIQQRKKQLAELE) adopt a coiled-coil conformation. 2 positions are modified to phosphoserine: Ser-112 and Ser-117. The residue at position 120 (Thr-120) is a Phosphothreonine. The disordered stretch occupies residues 127-148 (DEDDDVLSIDSGDAGSRTPKDQ). Residue Lys-182 forms a Glycyl lysine isopeptide (Lys-Gly) (interchain with G-Cter in SUMO2); alternate linkage. Lys-182 is covalently cross-linked (Glycyl lysine isopeptide (Lys-Gly) (interchain with G-Cter in ubiquitin); alternate). Tudor domains follow at residues 257–320 (KLFV…LKKT) and 347–403 (LLKS…SMKT). 3 disordered regions span residues 404-424 (SSAS…PNMG), 444-512 (IQFK…TLSE), and 531-570 (SVTS…AFHG). Pro residues predominate over residues 454 to 467 (PIAPPAPLPIPPLS). A compositionally biased stretch (polar residues) spans 476–494 (ESQLAQSRKQVAKKSTSFR). A compositionally biased stretch (low complexity) spans 495 to 512 (PGSVGSGHSSPTSSTLSE). Positions 539-565 (AAPPVPPVPPGPPTPPGPPAPPGPLAP) are enriched in pro residues. Positions 611-682 (YRGKNPLLVP…EMFCLDPYVL (72 aa)) constitute an MBD domain. The 74-residue stretch at 744–817 (VGCDCKDGCR…MCTNRLVQHG (74 aa)) folds into the Pre-SET domain. Zn(2+) contacts are provided by Cys-746, Cys-748, Cys-752, Cys-758, Cys-760, Cys-798, Cys-802, Cys-804, and Cys-809. Positions 820–1282 (VRLQLFKTQN…AGTELTWDYN (463 aa)) constitute an SET domain. Residues 830-832 (KGW), Asp-868, and Tyr-870 contribute to the S-adenosyl-L-methionine site. Lys-884 participates in a covalent cross-link: Glycyl lysine isopeptide (Lys-Gly) (interchain with G-Cter in ubiquitin). The segment at 885–1174 (EGYESDVPTS…KNLSGPTKRQ (290 aa)) is disordered. A compositionally biased stretch (acidic residues) spans 913-924 (EDPEESNDDSSD). Residues 950-966 (GQKENELSEMTSKDSRP) show a composition bias toward basic and acidic residues. The residue at position 1042 (Ser-1042) is a Phosphoserine. Residues 1048 to 1066 (FKDEGDNKQPKKEDPENRN) show a composition bias toward basic and acidic residues. Lys-1049 is covalently cross-linked (Glycyl lysine isopeptide (Lys-Gly) (interchain with G-Cter in SUMO2); alternate). Residue Lys-1049 forms a Glycyl lysine isopeptide (Lys-Gly) (interchain with G-Cter in SUMO1); alternate linkage. Glycyl lysine isopeptide (Lys-Gly) (interchain with G-Cter in SUMO2) cross-links involve residues Lys-1055 and Lys-1085. Over residues 1097-1112 (SVLQSQRVVTSTQSNP) the composition is skewed to polar residues. Low complexity predominate over residues 1116-1131 (LTLSSSTESEGESGTS). Residues 1137 to 1156 (GHTSATAVDSDDIQTISSGS) show a composition bias toward polar residues. Lys-1165 participates in a covalent cross-link: Glycyl lysine isopeptide (Lys-Gly) (interchain with G-Cter in SUMO2). Lys-1186 and Lys-1194 each carry N6,N6,N6-trimethyllysine; alternate. Lys-1186 and Lys-1194 each carry N6,N6-dimethyllysine; alternate. Residues Arg-1236 and 1239-1240 (NH) contribute to the S-adenosyl-L-methionine site. Positions 1242, 1295, 1297, and 1302 each coordinate Zn(2+). The Post-SET domain maps to 1291 to 1307 (KELLCCCGAIECRGRLL).

It belongs to the class V-like SAM-binding methyltransferase superfamily. Histone-lysine methyltransferase family. Suvar3-9 subfamily. In terms of assembly, part of a complex containing at least CDYL, REST, WIZ, SETDB1, EHMT1 and EHMT2. Forms a complex with ATRX, TRIM28 and ZNF274. Probably part of a corepressor complex containing ZNF304, TRIM28, SETDB1 and DNMT1. Interacts with TRIM28/TIF1B. Interacts with ATF7IP and ATF7IP2; the interaction with ATF7IP is required to stimulate histone methyltransferase activity and facilitate the conversion of dimethylated to trimethylated H3 'Lys-9'. Interacts with MBD1; interaction is abolished when MBD1 is sumoylated. Interacts with CBX1 and CBX5. Interacts with DNMT3A and DNMT3B. Interacts with SUMO2. Interacts with MPHOSPH8. Interacts with ERG. Interacts with HDAC1, HDAC2, SIN3A, SIN3B. Interacts with ATRX. Interacts with RESF1. Interacts with ZNF638. Interacts with TASOR. Interacts with ZNF263; recruited to the SIX3 promoter along with other proteins involved in chromatin modification and transcriptional corepression where it contributes to transcriptional repression. Interacts with PHF13; the interaction probably enhances SETDB1 chromatin-associated levels and activity. Interacts with VRK1. Degraded by the proteasome, shielded by interaction with ATF7IP. Post-translationally, monoubiquitinated at Lys-884 by E2 enzymes UBE2E family. The conjugated-Ub is protected from deubiquitination through the SET domain. Monoubiquitination at Lys-884 is required for catalytic activity and H3K9 methylation and endogenous retrovirus silencing. In terms of tissue distribution, ubiquitously expressed. Strong expression in liver and testis. Expressed in the brain, lungs, kidneys, uterus and seminal vesicles.

The protein localises to the nucleus. It localises to the chromosome. It catalyses the reaction N(6),N(6)-dimethyl-L-lysyl(9)-[histone H3] + S-adenosyl-L-methionine = N(6),N(6),N(6)-trimethyl-L-lysyl(9)-[histone H3] + S-adenosyl-L-homocysteine + H(+). Its function is as follows. Histone methyltransferase that specifically trimethylates 'Lys-9' of histone H3. H3 'Lys-9' trimethylation represents a specific tag for epigenetic transcriptional repression by recruiting HP1 (CBX1, CBX3 and/or CBX5) proteins to methylated histones. Mainly functions in euchromatin regions, thereby playing a central role in the silencing of euchromatic genes. H3 'Lys-9' trimethylation is coordinated with DNA methylation. Probably forms a complex with MBD1 and ATF7IP that represses transcription and couples DNA methylation and histone 'Lys-9' trimethylation. Its activity is dependent on MBD1 and is heritably maintained through DNA replication by being recruited by CAF-1. SETDB1 is targeted to histone H3 by TRIM28/TIF1B, a factor recruited by KRAB zinc-finger proteins. Probably forms a corepressor complex required for activated KRAS-mediated promoter hypermethylation and transcriptional silencing of tumor suppressor genes (TSGs) or other tumor-related genes in colorectal cancer (CRC) cells. Required to maintain a transcriptionally repressive state of genes in undifferentiated embryonic stem cells (ESCs). In ESCs, in collaboration with TRIM28, is also required for H3K9me3 and silencing of endogenous and introduced retroviruses in a DNA-methylation independent-pathway. Associates at promoter regions of tumor suppressor genes (TSGs) leading to their gene silencing. The SETDB1-TRIM28-ZNF274 complex may play a role in recruiting ATRX to the 3'-exons of zinc-finger coding genes with atypical chromatin signatures to establish or maintain/protect H3K9me3 at these transcriptionally active regions. The chain is Histone-lysine N-methyltransferase SETDB1 from Mus musculus (Mouse).